A 315-amino-acid chain; its full sequence is D-erythronate dehydrogenase (315 aa).

Residues S119, Y143, and K147 each contribute to the NAD(+) site. Y143 functions as the Proton acceptor in the catalytic mechanism.

Belongs to the NAD(P)-dependent epimerase/dehydratase family.

It carries out the reaction D-erythronate + NAD(+) = 2-dehydro-D-erythronate + NADH + H(+). Its function is as follows. Catalyzes oxidation of D-erythronate to 2-oxo-tetronate. Can use either NAD(+) or NADP(+) as cosubstrate, with a preference for NAD(+). This chain is D-erythronate dehydrogenase, found in Haemophilus influenzae (strain ATCC 51907 / DSM 11121 / KW20 / Rd).